Reading from the N-terminus, the 157-residue chain is Capsid protein (157 aa).

Serine 2 is subject to N-acetylserine; by host.

The protein belongs to the virgaviridae capsid protein family.

Its subcellular location is the virion. Its function is as follows. Capsid protein self-assembles to form rod-shaped virions about 18 nm in diameter with a central canal enclosing the viral genomic RNA. In Brassicaceae (TVCV), this protein is Capsid protein (CP).